Here is a 458-residue protein sequence, read N- to C-terminus: Protein U54 (458 aa).

7 N-linked (GlcNAc...) asparagine; by host glycosylation sites follow: Asn76, Asn102, Asn281, Asn321, Asn346, Asn434, and Asn451.

This sequence belongs to the herpesviridae UL82 family.

The chain is Protein U54 (U54) from Homo sapiens (Human).